The primary structure comprises 117 residues: Ribosome maturation factor RimP (117 aa).

The protein belongs to the RimP family.

Its subcellular location is the cytoplasm. Its function is as follows. Required for maturation of 30S ribosomal subunits. This Rickettsia prowazekii (strain Madrid E) protein is Ribosome maturation factor RimP.